We begin with the raw amino-acid sequence, 225 residues long: UPF0758 protein XOO0495 (225 aa).

The MPN domain maps to alanine 102–leucine 224. Zn(2+)-binding residues include histidine 173, histidine 175, and aspartate 186. The short motif at histidine 173–aspartate 186 is the JAMM motif element.

It belongs to the UPF0758 family.

The sequence is that of UPF0758 protein XOO0495 from Xanthomonas oryzae pv. oryzae (strain KACC10331 / KXO85).